The primary structure comprises 550 residues: Transcriptional repressor RHIT (550 aa).

Disordered stretches follow at residues 1–67 (MSAD…ETRA), 174–200 (VQGKGEAPGSSRQLGHEEEEKRGVVEV), and 216–296 (KSFK…EGLA). Composition is skewed to basic and acidic residues over residues 11 to 22 (AQDKERARETPG), 45 to 58 (ESPHIKMEPEEPHP), and 187 to 200 (LGHEEEEKRGVVEV). The 70-residue stretch at 124–193 (VTFEDMALYL…SRQLGHEEEE (70 aa)) folds into the KRAB domain. A Glycyl lysine isopeptide (Lys-Gly) (interchain with G-Cter in SUMO2) cross-link involves residue lysine 216. Residues 267–281 (DLPKTQEGHFPEQPR) are compositionally biased toward basic and acidic residues. The residue at position 290 (serine 290) is a Phosphoserine. C2H2-type zinc fingers lie at residues 306 to 328 (YKCEQCGKAFSWHSHLVTHRRTH), 334 to 356 (YACTDCGKRFGRSSHLIQHQIIH), 362 to 384 (YTCPSCWKSFSHHSTLIQHQRIH), 390 to 412 (YVCDRCAKRFTRRSDLVTHQGTH), 418 to 440 (HKCPICGKCFTQSSALVTHQRTH), 446 to 468 (YPCPECGKCFSQRSNLIAHNRTH), 474 to 496 (YHCLDCGKSFSHSSHLTAHQRTH), and 502 to 524 (YSCPLCGKSFSRRSNLHRHEKIH).

It belongs to the krueppel C2H2-type zinc-finger protein family.

Its subcellular location is the nucleus. Functionally, transcriptional repressor involved in regulating MPV17L expression. By regulating MPV17L expression, contributes to the regulation of genes involved in H(2)O(2) metabolism and the mitochondrial apoptotic cascade. This is Transcriptional repressor RHIT (ZNF205) from Bos taurus (Bovine).